A 106-amino-acid polypeptide reads, in one-letter code: Urease subunit beta (106 aa).

This sequence belongs to the urease beta subunit family. Heterotrimer of UreA (gamma), UreB (beta) and UreC (alpha) subunits. Three heterotrimers associate to form the active enzyme.

Its subcellular location is the cytoplasm. The enzyme catalyses urea + 2 H2O + H(+) = hydrogencarbonate + 2 NH4(+). Its pathway is nitrogen metabolism; urea degradation; CO(2) and NH(3) from urea (urease route): step 1/1. This is Urease subunit beta from Prochlorococcus marinus subsp. pastoris (strain CCMP1986 / NIES-2087 / MED4).